Reading from the N-terminus, the 266-residue chain is Glucosamine-6-phosphate deaminase (266 aa).

Catalysis depends on aspartate 72, which acts as the Proton acceptor; for enolization step. Residue aspartate 141 is the For ring-opening step of the active site. Histidine 143 acts as the Proton acceptor; for ring-opening step in catalysis. The active-site For ring-opening step is the glutamate 148.

Belongs to the glucosamine/galactosamine-6-phosphate isomerase family. NagB subfamily. Homohexamer.

The enzyme catalyses alpha-D-glucosamine 6-phosphate + H2O = beta-D-fructose 6-phosphate + NH4(+). It functions in the pathway amino-sugar metabolism; N-acetylneuraminate degradation; D-fructose 6-phosphate from N-acetylneuraminate: step 5/5. Allosterically activated by N-acetylglucosamine 6-phosphate (GlcNAc6P). Its function is as follows. Catalyzes the reversible isomerization-deamination of glucosamine 6-phosphate (GlcN6P) to form fructose 6-phosphate (Fru6P) and ammonium ion. This chain is Glucosamine-6-phosphate deaminase, found in Aliivibrio fischeri (strain ATCC 700601 / ES114) (Vibrio fischeri).